A 140-amino-acid chain; its full sequence is MSWDSYLDNLVAQSKDASGTAHVDRCCIIGLDGGAAWTTAGHACALKLQGQEGPNIAKCFKSKDFTAFMSGGVRAEGEKYQFLREEEGKTVLAKKKGNGAITLQASKTAIVLGHCPEGGQQGNTNKAVGVIADYLESLGM.

The protein belongs to the profilin family. As to quaternary structure, occurs in many kinds of cells as a complex with monomeric actin in a 1:1 ratio.

Binds to actin and affects the structure of the cytoskeleton. At high concentrations, profilin prevents the polymerization of actin, whereas it enhances it at low concentrations. By binding to PIP2, it inhibits the formation of IP3 and DG. The polypeptide is Profilin (Suberites domuncula (Sponge)).